The primary structure comprises 131 residues: D-ribose pyranase (131 aa).

H20 (proton donor) is an active-site residue. Substrate-binding positions include D28, H98, and 120–122 (YAN).

It belongs to the RbsD / FucU family. RbsD subfamily. As to quaternary structure, homodecamer.

The protein localises to the cytoplasm. The catalysed reaction is beta-D-ribopyranose = beta-D-ribofuranose. It participates in carbohydrate metabolism; D-ribose degradation; D-ribose 5-phosphate from beta-D-ribopyranose: step 1/2. In terms of biological role, catalyzes the interconversion of beta-pyran and beta-furan forms of D-ribose. In Bacillus cereus (strain AH187), this protein is D-ribose pyranase.